The following is a 392-amino-acid chain: tRNA (guanine-N(7)-)-methyltransferase (392 aa).

The S-adenosyl-L-methionine site is built by Glu-123, Glu-148, and Asp-175. Lys-201 and Asp-231 together coordinate substrate.

Belongs to the class I-like SAM-binding methyltransferase superfamily. TrmB family.

The enzyme catalyses guanosine(46) in tRNA + S-adenosyl-L-methionine = N(7)-methylguanosine(46) in tRNA + S-adenosyl-L-homocysteine. The protein operates within tRNA modification; N(7)-methylguanine-tRNA biosynthesis. In terms of biological role, catalyzes the formation of N(7)-methylguanine at position 46 (m7G46) in tRNA. This Campylobacter jejuni subsp. jejuni serotype O:2 (strain ATCC 700819 / NCTC 11168) protein is tRNA (guanine-N(7)-)-methyltransferase.